An 819-amino-acid chain; its full sequence is Aminopeptidase O (819 aa).

Histidine 479 is a Zn(2+) binding site. Residue glutamate 480 is the Proton acceptor of the active site. Zn(2+) contacts are provided by histidine 483 and glutamate 502. The Nucleolar localization signal motif lies at 689–699 (RRPRKRKRREK).

This sequence belongs to the peptidase M1 family. The cofactor is Zn(2+).

The protein localises to the nucleus. Its subcellular location is the nucleolus. It is found in the cytoplasm. Functionally, aminopeptidase which catalyzes the hydrolysis of amino acid residues from the N-terminus of peptide or protein substrates. The chain is Aminopeptidase O from Homo sapiens (Human).